Reading from the N-terminus, the 420-residue chain is Phosphoglycerate kinase (420 aa).

(2R)-3-phosphoglycerate is bound by residues Val24, Asp25, Phe26, Asn27, Arg40, Ser63, His64, Gly66, Arg67, Leu122, Arg123, His170, and Arg171. Position 214 (Gly214) interacts with ADP. Residue Gly214 coordinates CDP. Positions 215 and 216 each coordinate AMP. Ala215 is a binding site for ATP. Ala215 contributes to the Mg(2+) binding site. Asp219 serves as a coordination point for CDP. Asp219 contacts Mg(2+). Residue Lys220 coordinates AMP. Lys220 is a binding site for ATP. Gly238 contacts ADP. Residue Gly238 coordinates CDP. AMP-binding residues include Gly239 and Gly313. The ATP site is built by Gly239 and Gly313. The CDP site is built by Gly338 and Phe343. ADP is bound at residue Phe343. Residue Glu344 coordinates AMP. ATP is bound by residues Glu344, Asp375, and Thr376. Asp375 lines the Mg(2+) pocket.

Belongs to the phosphoglycerate kinase family. In terms of assembly, monomer. The cofactor is Mg(2+).

The enzyme catalyses (2R)-3-phosphoglycerate + ATP = (2R)-3-phospho-glyceroyl phosphate + ADP. It functions in the pathway carbohydrate degradation; glycolysis; pyruvate from D-glyceraldehyde 3-phosphate: step 2/5. This Tetrahymena thermophila protein is Phosphoglycerate kinase (PGK).